Here is a 160-residue protein sequence, read N- to C-terminus: Ribosomal RNA large subunit methyltransferase H (160 aa).

S-adenosyl-L-methionine contacts are provided by residues Leu76, Gly108, and 127–132 (LGKLTW).

It belongs to the RNA methyltransferase RlmH family. In terms of assembly, homodimer.

The protein resides in the cytoplasm. The catalysed reaction is pseudouridine(1915) in 23S rRNA + S-adenosyl-L-methionine = N(3)-methylpseudouridine(1915) in 23S rRNA + S-adenosyl-L-homocysteine + H(+). Specifically methylates the pseudouridine at position 1915 (m3Psi1915) in 23S rRNA. The protein is Ribosomal RNA large subunit methyltransferase H of Agrobacterium fabrum (strain C58 / ATCC 33970) (Agrobacterium tumefaciens (strain C58)).